Consider the following 370-residue polypeptide: tRNA-specific 2-thiouridylase MnmA (370 aa).

Residues 19-26 (AMSGGVDS) and leucine 45 each bind ATP. Cysteine 113 serves as the catalytic Nucleophile. Cysteine 113 and cysteine 209 are joined by a disulfide. Glycine 137 is a binding site for ATP. Residues 159–161 (RDQ) form an interaction with tRNA region. Cysteine 209 (cysteine persulfide intermediate) is an active-site residue.

Belongs to the MnmA/TRMU family.

Its subcellular location is the cytoplasm. It carries out the reaction S-sulfanyl-L-cysteinyl-[protein] + uridine(34) in tRNA + AH2 + ATP = 2-thiouridine(34) in tRNA + L-cysteinyl-[protein] + A + AMP + diphosphate + H(+). Catalyzes the 2-thiolation of uridine at the wobble position (U34) of tRNA, leading to the formation of s(2)U34. The polypeptide is tRNA-specific 2-thiouridylase MnmA (Zymomonas mobilis subsp. mobilis (strain ATCC 31821 / ZM4 / CP4)).